The following is a 389-amino-acid chain: S-adenosylmethionine synthase (389 aa).

Position 15 (histidine 15) interacts with ATP. A Mg(2+)-binding site is contributed by aspartate 17. Glutamate 43 lines the K(+) pocket. Residues glutamate 56 and glutamine 99 each contribute to the L-methionine site. The tract at residues 99–109 (QSPDIAQGVNE) is flexible loop. ATP-binding positions include 166–168 (DAK), 234–235 (RF), aspartate 243, 249–250 (RK), alanine 266, and lysine 270. Aspartate 243 serves as a coordination point for L-methionine. Lysine 274 serves as a coordination point for L-methionine.

The protein belongs to the AdoMet synthase family. In terms of assembly, homotetramer; dimer of dimers. Requires Mg(2+) as cofactor. K(+) is required as a cofactor.

It is found in the cytoplasm. It catalyses the reaction L-methionine + ATP + H2O = S-adenosyl-L-methionine + phosphate + diphosphate. It functions in the pathway amino-acid biosynthesis; S-adenosyl-L-methionine biosynthesis; S-adenosyl-L-methionine from L-methionine: step 1/1. Its function is as follows. Catalyzes the formation of S-adenosylmethionine (AdoMet) from methionine and ATP. The overall synthetic reaction is composed of two sequential steps, AdoMet formation and the subsequent tripolyphosphate hydrolysis which occurs prior to release of AdoMet from the enzyme. The polypeptide is S-adenosylmethionine synthase (Neisseria meningitidis serogroup A / serotype 4A (strain DSM 15465 / Z2491)).